The sequence spans 149 residues: Calmodulin (149 aa).

Ala-2 carries the N-acetylalanine modification. 4 EF-hand domains span residues Asp-8 to Asn-43, Pro-44 to Asp-79, Asp-81 to Lys-116, and Leu-117 to Lys-149. Asp-21, Asp-23, Asp-25, Cys-27, Glu-32, Asp-57, Asp-59, Asn-61, Thr-63, Glu-68, Asp-94, Asp-96, Asn-98, and Glu-105 together coordinate Ca(2+). At Lys-116 the chain carries N6,N6,N6-trimethyllysine. Ca(2+)-binding residues include Asp-130, Asp-132, Asp-134, Gln-136, and Glu-141.

The protein belongs to the calmodulin family.

Calmodulin mediates the control of a large number of enzymes, ion channels and other proteins by Ca(2+). Among the enzymes to be stimulated by the calmodulin-Ca(2+) complex are a number of protein kinases and phosphatases. In Capsicum annuum (Capsicum pepper), this protein is Calmodulin (CCM1).